A 409-amino-acid chain; its full sequence is MKPVVLVALLWLWPSSFLAYPTATVLPDEEQNLNHYVQILQNLIMSVPTKEQGFGRKFRSSRTVDGAEARSLSSEMLLTPGLVSAQEVTTPETEVMLTSMVEKTTFPSSGFTMESEKRRTHSKAFWSIQPNNVSIVLHTEEPYIEKEPEPEPELETEEESRRLATEPEPEPESESAPETETRQTAESEEEVETSTAQNKVRTGTSRMSTVITQTTNTQGTPNTVTVKTINNLDVSTESEDVPQLSGQSEILNVEDLPGHHSLSTRHENILRKISNINSQIHQGLLSDHSSPAYKEFIKASREHLKRSLALAAAAEHKLQQMYGSNVFLDGHTSDPDDDMEVIINMLYNSRSKLSDYFTINHVPSELREKATVVIAVLKKILCVDQVEMQSLIRKLLSNNMKILNILNVP.

The signal sequence occupies residues 1-18; the sequence is MKPVVLVALLWLWPSSFL. N-linked (GlcNAc...) asparagine glycosylation occurs at Asn-132. Residues 141 to 223 are disordered; the sequence is EPYIEKEPEP…TTNTQGTPNT (83 aa). Residues 167–177 are compositionally biased toward acidic residues; sequence PEPEPESESAP. The segment covering 198 to 208 has biased composition (polar residues); that stretch reads NKVRTGTSRMS. Residues 209-223 are compositionally biased toward low complexity; it reads TVITQTTNTQGTPNT.

This sequence belongs to the SPESP1 family. Glycosylated. In testis there are two predominant forms of 77- and 67-kDa and a form of 47-kDa, whereas in epididymal sperm from caput, corpus, and cauda there are two forms of 47- and 43-kDa. Testis forms contain complex carbohydrate residues. Epididymal sperm forms are N-glycosylated. Then undergoes significant glycosylation in the testis and that the majority of these glycoconjugates are removed by the time sperm reach the caput epididymis.

It localises to the cytoplasmic vesicle. Its subcellular location is the secretory vesicle. The protein localises to the acrosome. Its function is as follows. Involved in fertilization ability of sperm. This is Sperm equatorial segment protein 1 from Rattus norvegicus (Rat).